The sequence spans 416 residues: Serine hydroxymethyltransferase (416 aa).

(6S)-5,6,7,8-tetrahydrofolate is bound by residues L121 and 125–127 (GHL). Position 229 is an N6-(pyridoxal phosphate)lysine (K229).

Belongs to the SHMT family. As to quaternary structure, homodimer. Pyridoxal 5'-phosphate is required as a cofactor.

The protein localises to the cytoplasm. It catalyses the reaction (6R)-5,10-methylene-5,6,7,8-tetrahydrofolate + glycine + H2O = (6S)-5,6,7,8-tetrahydrofolate + L-serine. It participates in one-carbon metabolism; tetrahydrofolate interconversion. It functions in the pathway amino-acid biosynthesis; glycine biosynthesis; glycine from L-serine: step 1/1. Functionally, catalyzes the reversible interconversion of serine and glycine with tetrahydrofolate (THF) serving as the one-carbon carrier. This reaction serves as the major source of one-carbon groups required for the biosynthesis of purines, thymidylate, methionine, and other important biomolecules. Also exhibits THF-independent aldolase activity toward beta-hydroxyamino acids, producing glycine and aldehydes, via a retro-aldol mechanism. In Neisseria meningitidis serogroup C (strain 053442), this protein is Serine hydroxymethyltransferase.